A 275-amino-acid polypeptide reads, in one-letter code: NH(3)-dependent NAD(+) synthetase (275 aa).

46 to 53 (GISGGQDS) is a binding site for ATP. Asp52 contributes to the Mg(2+) binding site. Residue Arg140 coordinates deamido-NAD(+). Thr160 provides a ligand contact to ATP. Glu165 provides a ligand contact to Mg(2+). 2 residues coordinate deamido-NAD(+): Lys173 and Asp180. Lys189 and Thr211 together coordinate ATP. 260-261 (HK) is a binding site for deamido-NAD(+).

Belongs to the NAD synthetase family. As to quaternary structure, homodimer.

It catalyses the reaction deamido-NAD(+) + NH4(+) + ATP = AMP + diphosphate + NAD(+) + H(+). The protein operates within cofactor biosynthesis; NAD(+) biosynthesis; NAD(+) from deamido-NAD(+) (ammonia route): step 1/1. Catalyzes the ATP-dependent amidation of deamido-NAD to form NAD. Uses ammonia as a nitrogen source. This Salmonella agona (strain SL483) protein is NH(3)-dependent NAD(+) synthetase.